We begin with the raw amino-acid sequence, 489 residues long: Homoserine O-acetyltransferase (489 aa).

The region spanning 47–354 (NAILVCHALT…NYGHDSFLLE (308 aa)) is the AB hydrolase-1 domain. S152 acts as the Nucleophile in catalysis. Residue R221 participates in substrate binding. Active-site residues include D315 and H348. D349 contributes to the substrate binding site. CBS domains are found at residues 375-434 (MIED…NLEE) and 436-489 (MTKN…IEEF).

This sequence belongs to the AB hydrolase superfamily. MetX family. Homodimer.

It is found in the cytoplasm. The catalysed reaction is L-homoserine + acetyl-CoA = O-acetyl-L-homoserine + CoA. It participates in amino-acid biosynthesis; L-methionine biosynthesis via de novo pathway; O-acetyl-L-homoserine from L-homoserine: step 1/1. Its function is as follows. Transfers an acetyl group from acetyl-CoA to L-homoserine, forming acetyl-L-homoserine. This is Homoserine O-acetyltransferase from Methanohalobium evestigatum (strain ATCC BAA-1072 / DSM 3721 / NBRC 107634 / OCM 161 / Z-7303).